The following is a 317-amino-acid chain: Probable pathogenesis-related protein CaO19.6200 (317 aa).

The N-terminal stretch at 1–23 is a signal peptide; that stretch reads MKFLQSFPVILAVFSFAANLVSS. Disordered regions lie at residues 52–116 and 155–179; these read RLET…TTVT and PSAP…DSQL. Residues 58–76 are compositionally biased toward low complexity; that stretch reads PTSTTTTIVIPSSKPSSPE. Polar residues-rich tracts occupy residues 84-116 and 168-179; these read QPMF…TTVT and ENNSGTNDDSQL. An N-linked (GlcNAc...) asparagine glycan is attached at asparagine 169. In terms of domain architecture, SCP spans 187-297; sequence LEAHNIKRAS…GWGLYIICNY (111 aa).

It belongs to the CRISP family.

Its subcellular location is the secreted. Secreted protein that acts as a virulence factor during infections. The polypeptide is Probable pathogenesis-related protein CaO19.6200 (Candida albicans (strain SC5314 / ATCC MYA-2876) (Yeast)).